The sequence spans 145 residues: Large ribosomal subunit protein uL16 (145 aa).

This sequence belongs to the universal ribosomal protein uL16 family. In terms of assembly, part of the 50S ribosomal subunit.

Binds 23S rRNA and is also seen to make contacts with the A and possibly P site tRNAs. The polypeptide is Large ribosomal subunit protein uL16 (Herpetosiphon aurantiacus (strain ATCC 23779 / DSM 785 / 114-95)).